The sequence spans 654 residues: Chaperone protein HtpG (654 aa).

The a; substrate-binding stretch occupies residues 1–344 (MTVENAPQRE…SDDLPLNVSR (344 aa)). The tract at residues 345-556 (ELLQDSQVVR…EGGSPAYLER (212 aa)) is b. Positions 557-654 (LLQQRGRGAG…AQTPASATAS (98 aa)) are c.

This sequence belongs to the heat shock protein 90 family. Homodimer.

It localises to the cytoplasm. Molecular chaperone. Has ATPase activity. The chain is Chaperone protein HtpG from Myxococcus xanthus (strain DK1622).